The following is a 91-amino-acid chain: UPF0512 protein M (91 aa).

The protein belongs to the UPF0512 family.

In Dictyostelium discoideum (Social amoeba), this protein is UPF0512 protein M.